The primary structure comprises 166 residues: Large ribosomal subunit protein mL49 (166 aa).

The interval 56 to 78 (RIPDPPKHEHYPTPSGWQPPRDP) is disordered.

It belongs to the mitochondrion-specific ribosomal protein mL49 family. Interacts with OXA1L.

It is found in the mitochondrion. In Macaca fascicularis (Crab-eating macaque), this protein is Large ribosomal subunit protein mL49 (MRPL49).